The chain runs to 230 residues: Large ribosomal subunit protein uL1 (230 aa).

Belongs to the universal ribosomal protein uL1 family. Part of the 50S ribosomal subunit.

Its function is as follows. Binds directly to 23S rRNA. The L1 stalk is quite mobile in the ribosome, and is involved in E site tRNA release. Protein L1 is also a translational repressor protein, it controls the translation of the L11 operon by binding to its mRNA. This Desulforapulum autotrophicum (strain ATCC 43914 / DSM 3382 / VKM B-1955 / HRM2) (Desulfobacterium autotrophicum) protein is Large ribosomal subunit protein uL1.